The sequence spans 303 residues: Pantothenate synthetase (303 aa).

30 to 37 (MGYLHAGH) is an ATP binding site. Residue His-37 is the Proton donor of the active site. (R)-pantoate is bound at residue Gln-61. Residue Gln-61 participates in beta-alanine binding. 147 to 150 (GAKD) lines the ATP pocket. Residue Gln-153 participates in (R)-pantoate binding. ATP-binding positions include Val-176 and 184 to 187 (LSSR).

The protein belongs to the pantothenate synthetase family. Homodimer.

The protein resides in the cytoplasm. The catalysed reaction is (R)-pantoate + beta-alanine + ATP = (R)-pantothenate + AMP + diphosphate + H(+). The protein operates within cofactor biosynthesis; (R)-pantothenate biosynthesis; (R)-pantothenate from (R)-pantoate and beta-alanine: step 1/1. In terms of biological role, catalyzes the condensation of pantoate with beta-alanine in an ATP-dependent reaction via a pantoyl-adenylate intermediate. In Rhizobium johnstonii (strain DSM 114642 / LMG 32736 / 3841) (Rhizobium leguminosarum bv. viciae), this protein is Pantothenate synthetase.